The sequence spans 165 residues: LOB domain-containing protein 3 (165 aa).

In terms of domain architecture, LOB spans 13–115; sequence SPCAGCKLLR…TQLAFAQAEL (103 aa).

Belongs to the LOB domain-containing protein family. In terms of tissue distribution, expressed in young shoots, roots, stems, leaves and flowers. At the bases of lateral organs formed from vegetative, inflorescence, and floral meristems.

It is found in the nucleus. This chain is LOB domain-containing protein 3 (LBD3), found in Arabidopsis thaliana (Mouse-ear cress).